The chain runs to 151 residues: Ribosome maturation factor RimP (151 aa).

This sequence belongs to the RimP family.

The protein resides in the cytoplasm. Functionally, required for maturation of 30S ribosomal subunits. The sequence is that of Ribosome maturation factor RimP from Nitrosococcus oceani (strain ATCC 19707 / BCRC 17464 / JCM 30415 / NCIMB 11848 / C-107).